A 1148-amino-acid polypeptide reads, in one-letter code: Envelopment polyprotein (1148 aa).

The N-terminal stretch at 1 to 23 (MGELSPVCLCLLLQGLLLCNTGA) is a signal peptide. At 24–496 (ARNLNELKME…PGLHGWATML (473 aa)) the chain is on the lumenal side. Disulfide bonds link Cys-34-Cys-159, Cys-68-Cys-165, Cys-117-Cys-136, Cys-141-Cys-146, Cys-183-Cys-193, and Cys-218-Cys-257. N-linked (GlcNAc...) asparagine; by host glycosylation is present at Asn-142. N-linked (GlcNAc...) asparagine; by host glycosylation is present at Asn-357. Disulfide bonds link Cys-386-Cys-445, Cys-390-Cys-399, Cys-415-Cys-434, and Cys-462-Cys-485. Asn-409 is a glycosylation site (N-linked (GlcNAc...) asparagine; by host). The chain crosses the membrane as a helical span at residues 497 to 517 (LLLTFCFGWVLIPTITMILLK). Topologically, residues 518–637 (ILIAFAYLCS…LSLFRYRSRF (120 aa)) are cytoplasmic. A binding to the ribonucleoprotein region spans residues 526–543 (CSKYNTDSKFRILIEKVK). CCHC-type zinc fingers lie at residues 555–575 (CEVC…RKSC) and 580–601 (CPYC…FKVC). Binding to the ribonucleoprotein regions lie at residues 598 to 615 (FKVC…RKSL), 602 to 613 (KLTSRFQENLRK), and 621 to 635 (MQGC…RYRS). The ITAM domain maps to 621 to 644 (MQGCYRTLSLFRYRSRFFVGLVWC). The YxxL motif lies at 625–628 (YRTL). A helical transmembrane segment spans residues 638–658 (FVGLVWCVLLVLELIVWAASA). Residues 659 to 1115 (ETQNLNAGWT…WILGVLNGNW (457 aa)) are Lumenal-facing. 8 cysteine pairs are disulfide-bonded: Cys-745–Cys-780, Cys-749–Cys-787, Cys-761–Cys-894, Cys-775–Cys-905, Cys-790–Cys-913, Cys-816–Cys-825, Cys-833–Cys-842, and Cys-873–Cys-877. The tract at residues 767 to 787 (YEYETGWGCNPPDCPGVGTGC) is fusion loop. Residue Asn-937 is glycosylated (N-linked (GlcNAc...) asparagine; by host). Cystine bridges form between Cys-979-Cys-1009, Cys-1002-Cys-1054, Cys-1019-Cys-1024, Cys-1055-Cys-1060, and Cys-1094-Cys-1098. Residues 1116–1136 (MVVAVLVVLLILSILLFTLCC) traverse the membrane as a helical segment. 2 binding to the ribonucleoprotein regions span residues 1131–1143 (LFTL…PSYR) and 1131–1148 (LFTL…EHKP). The Cytoplasmic segment spans residues 1137–1148 (PRRPSYRKEHKP).

This sequence belongs to the hantavirus envelope glycoprotein family. As to quaternary structure, homodimer. Homotetramer; forms heterotetrameric Gn-Gc spikes in the pre-fusion conformation. Interacts (via C-terminus) with the nucleoprotein. Interacts with host TUFM; this interaction contributes to the virus-induced degradation of mitochondria by autophagy, which leads to degradation of host MAVS and inhibition of type I interferon (IFN) responses. Interacts with host MAP1LC3B; this interaction contributes to the virus-induced degradation of mitochondria by autophagy, which leads to degradation of host MAVS and inhibition of type I interferon (IFN) responses. In terms of assembly, homodimer. Homotetramer; forms heterotetrameric Gn-Gc spikes in the pre-fusion conformation. Homotrimer; forms homotrimer in the post-fusion conformation at acidic pH. Interacts (via C-terminus) with the nucleoprotein. In terms of processing, envelope polyprotein precursor is quickly cleaved in vivo just after synthesis, presumably by host signal peptidase.

The protein resides in the virion membrane. It is found in the host cell surface. Its subcellular location is the host Golgi apparatus membrane. The protein localises to the host endoplasmic reticulum membrane. It localises to the host mitochondrion. Functionally, forms homotetramers with glycoprotein C at the surface of the virion. Attaches the virion to host cell receptors including integrin ITGAV/ITGB3. This attachment induces virion internalization predominantly through clathrin-dependent endocytosis. Mediates the assembly and budding of infectious virus particles through its interaction with the nucleocapsid protein and the viral genome. May dysregulate normal immune and endothelial cell responses through an ITAM motif. Translocates to mitochondria, binds to host TUFM and recruits MAP1LC3B. These interactions induce mitochondrial autophagy and therefore destruction of host MAVS leading to inhibition of type I interferon (IFN) responses. Concomitant breakdown of glycoprotein N is apparently prevented by the nucleoprotein that may inhibit Gn-stimulated autophagosome-lysosome fusion. Interacts with the viral genomic RNA. Forms homotetramers with glycoprotein N at the surface of the virion. Attaches the virion to host cell receptors including integrin ITGAV/ITGB3. This attachment induces virion internalization predominantly through clathrin-dependent endocytosis. Class II fusion protein that promotes fusion of viral membrane with host endosomal membrane after endocytosis of the virion. The protein is Envelopment polyprotein (GP) of Homo sapiens (Human).